The chain runs to 85 residues: UPF0386 protein RL2079 (85 aa).

This sequence belongs to the UPF0386 family.

The protein is UPF0386 protein RL2079 of Rhizobium johnstonii (strain DSM 114642 / LMG 32736 / 3841) (Rhizobium leguminosarum bv. viciae).